The sequence spans 198 residues: Protein hunchback (198 aa).

Disordered regions lie at residues 16–116 (SHHH…NPMQ) and 158–198 (LTPP…KYMA). A compositionally biased stretch (basic residues) spans 17 to 31 (HHHHHHHAHHSHHQH). Composition is skewed to low complexity over residues 35 to 46 (SNSNSNASSPHQ) and 68 to 83 (QQQQ…QQQQ). Residues 95 to 105 (PSPSNNDQNSP) show a composition bias toward polar residues. Residues 179 to 198 (EPEKEHDLMSNSSEDMKYMA) are compositionally biased toward basic and acidic residues.

It belongs to the hunchback C2H2-type zinc-finger protein family.

It localises to the nucleus. In terms of biological role, gap class segmentation protein that controls development of head structures. The protein is Protein hunchback (hb) of Drosophila cyrtoloma (Fruit fly).